The primary structure comprises 159 residues: V-type proton ATPase 16 kDa proteolipid subunit c (159 aa).

Topologically, residues 1–11 (MSEEGSPMYSP) are lumenal. A helical transmembrane segment spans residues 12 to 32 (FFGVMGAASAMVFSALGAAYG). Over 33-54 (TAKSGVGISAMSVMRPELIMKC) the chain is Cytoplasmic. The chain crosses the membrane as a helical span at residues 55-75 (IIPVVMAGIIAIYGLVVAVLI). Residues 76 to 93 (AGKLDEAPTYTLYQGFVH) lie on the Lumenal side of the membrane. The helical transmembrane segment at 94-114 (MGAGLSVGLSGLAAGFAIGIV) threads the bilayer. The Cytoplasmic segment spans residues 115–132 (GDAGVRGTAQQPRLYVGM). The chain crosses the membrane as a helical span at residues 133-153 (ILILIFAEVLGLYGLIVAIFL). Topologically, residues 154–159 (YTKTSS) are lumenal.

Belongs to the V-ATPase proteolipid subunit family. In terms of assembly, V-ATPase is a heteromultimeric enzyme made up of two complexes: the ATP-hydrolytic V1 complex and the proton translocation V0 complex. The V1 complex consists of three catalytic AB heterodimers that form a heterohexamer, three peripheral stalks each consisting of EG heterodimers, one central rotor including subunits D and F, and the regulatory subunits C and H. The proton translocation complex V0 consists of the proton transport subunit a, a ring of proteolipid subunits c9c'', rotary subunit d, subunits e and f, and two accessory subunits.

It localises to the vacuole membrane. In terms of biological role, proton-conducting pore forming subunit of the V0 complex of vacuolar(H+)-ATPase (V-ATPase), a multisubunit enzyme composed of a peripheral complex (V1) that hydrolyzes ATP and a membrane integral complex (V0) that translocates protons. V-ATPase is responsible for acidifying and maintaining the pH of intracellular compartments and in some cell types, is targeted to the plasma membrane, where it is responsible for acidifying the extracellular environment. This Nephrops norvegicus (Norway lobster) protein is V-type proton ATPase 16 kDa proteolipid subunit c.